The chain runs to 254 residues: 3-deoxy-manno-octulosonate cytidylyltransferase (254 aa).

It belongs to the KdsB family.

It is found in the cytoplasm. The catalysed reaction is 3-deoxy-alpha-D-manno-oct-2-ulosonate + CTP = CMP-3-deoxy-beta-D-manno-octulosonate + diphosphate. The protein operates within nucleotide-sugar biosynthesis; CMP-3-deoxy-D-manno-octulosonate biosynthesis; CMP-3-deoxy-D-manno-octulosonate from 3-deoxy-D-manno-octulosonate and CTP: step 1/1. It functions in the pathway bacterial outer membrane biogenesis; lipopolysaccharide biosynthesis. Its function is as follows. Activates KDO (a required 8-carbon sugar) for incorporation into bacterial lipopolysaccharide in Gram-negative bacteria. In Pseudomonas putida (strain W619), this protein is 3-deoxy-manno-octulosonate cytidylyltransferase.